Here is a 600-residue protein sequence, read N- to C-terminus: Aspartate--tRNA(Asp/Asn) ligase (600 aa).

Residue Glu-174 coordinates L-aspartate. The interval 198–201 is aspartate; sequence QLFK. Position 220 (Arg-220) interacts with L-aspartate. ATP-binding positions include 220 to 222 and Gln-229; that span reads RDE. Residue His-457 coordinates L-aspartate. Glu-491 contacts ATP. Arg-498 contributes to the L-aspartate binding site. Residue 543–546 coordinates ATP; sequence GLDR.

The protein belongs to the class-II aminoacyl-tRNA synthetase family. Type 1 subfamily. In terms of assembly, homodimer.

It is found in the cytoplasm. It catalyses the reaction tRNA(Asx) + L-aspartate + ATP = L-aspartyl-tRNA(Asx) + AMP + diphosphate. Functionally, aspartyl-tRNA synthetase with relaxed tRNA specificity since it is able to aspartylate not only its cognate tRNA(Asp) but also tRNA(Asn). Reaction proceeds in two steps: L-aspartate is first activated by ATP to form Asp-AMP and then transferred to the acceptor end of tRNA(Asp/Asn). The chain is Aspartate--tRNA(Asp/Asn) ligase from Burkholderia mallei (strain NCTC 10247).